Here is a 590-residue protein sequence, read N- to C-terminus: Dystrobrevin-1 (590 aa).

A compositionally biased stretch (gly residues) spans 1-10 (MLWSNGGGGP). The segment at 1–25 (MLWSNGGGGPREPSSAPSPDHHRAM) is disordered. The ZZ-type zinc finger occupies 259-315 (YHPVVCDACQVRSFTGFRYKCQRCANYQLCQSCFWRGRTSQNHSNEHEMKEYSSYKS). C264, C267, C279, C282, C288, C291, H301, and H305 together coordinate Zn(2+). The stretch at 434–508 (SMVGDERTLI…EHLMAQLNTG (75 aa)) forms a coiled coil. The tract at residues 468-590 (DGLAGLRDRK…DENGVTINGF (123 aa)) is essential for interaction with ctn-1. An essential for interaction with dys-1 region spans residues 484-490 (MFEMQQR).

The protein belongs to the dystrophin family. Dystrobrevin subfamily. As to quaternary structure, component of the dystrophin glycoprotein complex (DGC). Interacts with dystrophin (dys-1) and syntrophin (stn-1) to form the DGC. Interacts (via C-terminus) with ctn-1 (via N-terminus); the interaction is required for localization of the dystrophin complex and ctn-1 near dense bodies in muscle cells. As to expression, from late embryogenesis to adulthood, expressed in neurons and muscles; particularly strong in the ventral nerve cord and in muscles of the body wall, head pharyngeal, and vulva; weaker in the intestinal muscle (at protein level).

It is found in the cytoplasm. Plays a role in cholinergic transmission and as a functional partner of dystrophin (dys-1), necessary for muscle maintenance. Required for localization of ctn-1 near dense bodies in muscle cells. The sequence is that of Dystrobrevin-1 from Caenorhabditis elegans.